Here is a 203-residue protein sequence, read N- to C-terminus: Small ribosomal subunit protein uS4 (203 aa).

The interval leucine 20–serine 45 is disordered. In terms of domain architecture, S4 RNA-binding spans methionine 92–alanine 155.

Belongs to the universal ribosomal protein uS4 family. As to quaternary structure, part of the 30S ribosomal subunit. Contacts protein S5. The interaction surface between S4 and S5 is involved in control of translational fidelity.

Its function is as follows. One of the primary rRNA binding proteins, it binds directly to 16S rRNA where it nucleates assembly of the body of the 30S subunit. Functionally, with S5 and S12 plays an important role in translational accuracy. The chain is Small ribosomal subunit protein uS4 from Synechococcus sp. (strain JA-3-3Ab) (Cyanobacteria bacterium Yellowstone A-Prime).